A 344-amino-acid chain; its full sequence is Dihydroorotase (344 aa).

Zn(2+) contacts are provided by histidine 14 and histidine 16. Residues 16 to 18 (HLR) and asparagine 42 contribute to the substrate site. The Zn(2+) site is built by lysine 100, histidine 137, and histidine 175. Residue lysine 100 is modified to N6-carboxylysine. Histidine 137 contacts substrate. Residue leucine 220 coordinates substrate. A Zn(2+)-binding site is contributed by aspartate 248. The active site involves aspartate 248. The substrate site is built by histidine 252 and alanine 264.

It belongs to the metallo-dependent hydrolases superfamily. DHOase family. Class II DHOase subfamily. In terms of assembly, homodimer. The cofactor is Zn(2+).

The catalysed reaction is (S)-dihydroorotate + H2O = N-carbamoyl-L-aspartate + H(+). Its pathway is pyrimidine metabolism; UMP biosynthesis via de novo pathway; (S)-dihydroorotate from bicarbonate: step 3/3. Its function is as follows. Catalyzes the reversible cyclization of carbamoyl aspartate to dihydroorotate. This is Dihydroorotase from Cupriavidus taiwanensis (strain DSM 17343 / BCRC 17206 / CCUG 44338 / CIP 107171 / LMG 19424 / R1) (Ralstonia taiwanensis (strain LMG 19424)).